The primary structure comprises 177 residues: MLGSLSKDAVAKSLVSRLGKKNVMQVPRVVKVCLNMGIGISAADSKVMDSCTRDLAMISAQKPVVTRARKSIAGFKIRKGFPIGCMVTLRGKRMYEFLDRLINIALPRERDFRGLSTSQLDGHGNISFGIKEHISFLEVDYDKIDKVRGLDVVIVTTATNDADAKALLLELGFPFMN.

Belongs to the universal ribosomal protein uL5 family. In terms of assembly, part of the 50S ribosomal subunit; part of the 5S rRNA/L5/L18/L25 subcomplex. Contacts the 5S rRNA and the P site tRNA. Forms a bridge to the 30S subunit in the 70S ribosome.

In terms of biological role, this is one of the proteins that bind and probably mediate the attachment of the 5S RNA into the large ribosomal subunit, where it forms part of the central protuberance. In the 70S ribosome it contacts protein S13 of the 30S subunit (bridge B1b), connecting the 2 subunits; this bridge is implicated in subunit movement. Contacts the P site tRNA; the 5S rRNA and some of its associated proteins might help stabilize positioning of ribosome-bound tRNAs. This is Large ribosomal subunit protein uL5 from Anaplasma phagocytophilum (strain HZ).